Here is a 407-residue protein sequence, read N- to C-terminus: Acetate kinase (407 aa).

Asn10 is a binding site for Mg(2+). Lys17 is a binding site for ATP. Arg93 is a binding site for substrate. Asp150 (proton donor/acceptor) is an active-site residue. ATP contacts are provided by residues 210-214 (HLGNG), 284-286 (DMR), and 332-336 (GVGEN). Glu386 contributes to the Mg(2+) binding site.

It belongs to the acetokinase family. As to quaternary structure, homodimer. Mg(2+) is required as a cofactor. Mn(2+) serves as cofactor.

The protein resides in the cytoplasm. It catalyses the reaction acetate + ATP = acetyl phosphate + ADP. It functions in the pathway metabolic intermediate biosynthesis; acetyl-CoA biosynthesis; acetyl-CoA from acetate: step 1/2. Catalyzes the formation of acetyl phosphate from acetate and ATP. Can also catalyze the reverse reaction. The chain is Acetate kinase from Streptomyces coelicolor (strain ATCC BAA-471 / A3(2) / M145).